A 146-amino-acid polypeptide reads, in one-letter code: Linear conopeptide (146 aa).

The first 19 residues, 1–19 (MLRLIIAAAVLVSACLAYP), serve as a signal peptide directing secretion. Residues 20–34 (QRREGAPADAANLQS) constitute a propeptide that is removed on maturation. Met40 bears the Methionine sulfoxide; partial; in Cn2 mark. 2 consecutive propeptides follow at residues 58–80 (FLPFNPNLQMGYKRDFDENLEKR) and 104–146 (FLHN…DKEQ). Positions 107 to 146 (NEKGDKHPFANVDSADTDLGQFEPSAENKNGEFRFFDKEQ) are disordered. Residues 135-146 (KNGEFRFFDKEQ) are compositionally biased toward basic and acidic residues.

As to expression, expressed by the venom duct.

The protein resides in the secreted. The chain is Linear conopeptide from Conus consors (Singed cone).